The chain runs to 150 residues: Globin-5 (150 aa).

Residues 11 to 150 (PLSAAEKTKI…MICILLRSAY (140 aa)) form the Globin domain. 2 residues coordinate heme b: His74 and His106.

The protein belongs to the globin family. As to quaternary structure, monomer at high oxygen tension and high pH and dimeric at low oxygen tension and lower pH.

This chain is Globin-5, found in Petromyzon marinus (Sea lamprey).